Here is a 284-residue protein sequence, read N- to C-terminus: L-ribulose-5-phosphate 3-epimerase UlaE (284 aa).

It belongs to the L-ribulose-5-phosphate 3-epimerase family.

It carries out the reaction L-ribulose 5-phosphate = L-xylulose 5-phosphate. It participates in cofactor degradation; L-ascorbate degradation; D-xylulose 5-phosphate from L-ascorbate: step 3/4. In terms of biological role, catalyzes the isomerization of L-xylulose-5-phosphate to L-ribulose-5-phosphate. Is involved in the anaerobic L-ascorbate utilization. This is L-ribulose-5-phosphate 3-epimerase UlaE from Shigella flexneri.